A 337-amino-acid chain; its full sequence is Probable sulfurtransferase (337 aa).

Glycine 83 lines the ATP pocket. Positions 172 and 175 each coordinate [4Fe-4S] cluster. Lysine 179 and glycine 206 together coordinate ATP. Cysteine 284 serves as a coordination point for [4Fe-4S] cluster.

It belongs to the TtcA family. [4Fe-4S] cluster is required as a cofactor. The cofactor is Mg(2+).

The polypeptide is Probable sulfurtransferase (Methanocaldococcus jannaschii (strain ATCC 43067 / DSM 2661 / JAL-1 / JCM 10045 / NBRC 100440) (Methanococcus jannaschii)).